A 346-amino-acid polypeptide reads, in one-letter code: Protein SHI RELATED SEQUENCE 5 (346 aa).

Residues 7 to 31 (LGGRDNNSNNNKQDHHQVDKDHHHQ) are disordered. Over residues 18-31 (KQDHHQVDKDHHHQ) the composition is skewed to basic and acidic residues. Zn(2+)-binding residues include Cys-125, Cys-128, Cys-136, Cys-141, Cys-145, and Cys-152. The zn(2)-C6 fungal-type; degenerate DNA-binding region spans 125 to 152 (CQDCGNQAKKDCPHMRCRTCCKSRGFHC). Residues 175–186 (SLQHHSASSRET) show a composition bias toward polar residues. The interval 175–215 (SLQHHSASSRETQNAKRLREASGGDNNDDKDHSGGGGSALA) is disordered. A compositionally biased stretch (basic and acidic residues) spans 187–207 (QNAKRLREASGGDNNDDKDHS). The Required for homo- and heterodimerization motif lies at 269-272 (IGGH).

It belongs to the SHI protein family.

Its subcellular location is the nucleus. Its function is as follows. Transcription activator that binds DNA on 5'-ACTCTAC-3' and promotes auxin homeostasis-regulating gene expression (e.g. YUC genes), as well as genes affecting stamen development, cell expansion and timing of flowering. Synergistically with other SHI-related proteins, regulates gynoecium, stamen and leaf development in a dose-dependent manner, controlling apical-basal patterning. Promotes style and stigma formation, and influences vascular development during gynoecium development. May also have a role in the formation and/or maintenance of the shoot apical meristem (SAM). The sequence is that of Protein SHI RELATED SEQUENCE 5 (SRS5) from Arabidopsis thaliana (Mouse-ear cress).